We begin with the raw amino-acid sequence, 143 residues long: Actin-depolymerizing factor (143 aa).

The ADF-H domain maps to 11–143 (GMGVADHSKN…DLEVLRERAH (133 aa)).

The protein belongs to the actin-binding proteins ADF family.

Its function is as follows. Actin-depolymerizing protein. Severs actin filaments (F-actin) and binds to actin monomers. This is Actin-depolymerizing factor from Vitis vinifera (Grape).